The chain runs to 315 residues: Methenyltetrahydromethanopterin cyclohydrolase (315 aa).

Belongs to the MCH family.

The protein localises to the cytoplasm. It carries out the reaction 5,10-methenyl-5,6,7,8-tetrahydromethanopterin + H2O = N(5)-formyl-5,6,7,8-tetrahydromethanopterin + H(+). Its pathway is one-carbon metabolism; methanogenesis from CO(2); 5,10-methenyl-5,6,7,8-tetrahydromethanopterin from CO(2): step 3/3. Functionally, catalyzes the reversible interconversion of 5-formyl-H(4)MPT to methenyl-H(4)MPT(+). In Methanoculleus marisnigri (strain ATCC 35101 / DSM 1498 / JR1), this protein is Methenyltetrahydromethanopterin cyclohydrolase.